The primary structure comprises 465 residues: UDP-N-acetylmuramate--L-alanine ligase (465 aa).

112-118 is a binding site for ATP; the sequence is GTHGKTT.

This sequence belongs to the MurCDEF family.

It localises to the cytoplasm. The enzyme catalyses UDP-N-acetyl-alpha-D-muramate + L-alanine + ATP = UDP-N-acetyl-alpha-D-muramoyl-L-alanine + ADP + phosphate + H(+). The protein operates within cell wall biogenesis; peptidoglycan biosynthesis. Functionally, cell wall formation. The protein is UDP-N-acetylmuramate--L-alanine ligase of Burkholderia mallei (strain NCTC 10247).